The following is a 353-amino-acid chain: Uroporphyrinogen decarboxylase (353 aa).

Residues 30–34 (RQAGR), Asp-79, Tyr-154, Ser-209, and His-332 contribute to the substrate site.

The protein belongs to the uroporphyrinogen decarboxylase family. As to quaternary structure, homodimer.

Its subcellular location is the cytoplasm. It catalyses the reaction uroporphyrinogen III + 4 H(+) = coproporphyrinogen III + 4 CO2. The protein operates within porphyrin-containing compound metabolism; protoporphyrin-IX biosynthesis; coproporphyrinogen-III from 5-aminolevulinate: step 4/4. In terms of biological role, catalyzes the decarboxylation of four acetate groups of uroporphyrinogen-III to yield coproporphyrinogen-III. The protein is Uroporphyrinogen decarboxylase of Mycobacterium marinum (strain ATCC BAA-535 / M).